Here is a 364-residue protein sequence, read N- to C-terminus: tRNA-specific 2-thiouridylase MnmA 1 (364 aa).

Residues 10 to 17 (GMSGGVDS) and Met36 contribute to the ATP site. Residue Cys106 is the Nucleophile of the active site. A disulfide bridge links Cys106 with Cys204. Gly130 is a binding site for ATP. Positions 154–156 (KDQ) are interaction with tRNA. Cys204 functions as the Cysteine persulfide intermediate in the catalytic mechanism. Residues 310–311 (RY) are interaction with tRNA.

This sequence belongs to the MnmA/TRMU family.

It localises to the cytoplasm. It carries out the reaction S-sulfanyl-L-cysteinyl-[protein] + uridine(34) in tRNA + AH2 + ATP = 2-thiouridine(34) in tRNA + L-cysteinyl-[protein] + A + AMP + diphosphate + H(+). Catalyzes the 2-thiolation of uridine at the wobble position (U34) of tRNA, leading to the formation of s(2)U34. In Caldanaerobacter subterraneus subsp. tengcongensis (strain DSM 15242 / JCM 11007 / NBRC 100824 / MB4) (Thermoanaerobacter tengcongensis), this protein is tRNA-specific 2-thiouridylase MnmA 1.